A 252-amino-acid chain; its full sequence is Chitooligosaccharide deacetylase (252 aa).

H61 and H125 together coordinate Mg(2+).

The protein belongs to the YdjC deacetylase family. ChbG subfamily. As to quaternary structure, homodimer. Mg(2+) is required as a cofactor.

It localises to the cytoplasm. The enzyme catalyses N,N'-diacetylchitobiose + H2O = N-acetyl-beta-D-glucosaminyl-(1-&gt;4)-D-glucosamine + acetate. It catalyses the reaction diacetylchitobiose-6'-phosphate + H2O = N'-monoacetylchitobiose-6'-phosphate + acetate. Its pathway is glycan degradation; chitin degradation. Functionally, involved in the degradation of chitin. ChbG is essential for growth on the acetylated chitooligosaccharides chitobiose and chitotriose but is dispensable for growth on cellobiose and chitosan dimer, the deacetylated form of chitobiose. Deacetylation of chitobiose-6-P and chitotriose-6-P is necessary for both the activation of the chb promoter by the regulatory protein ChbR and the hydrolysis of phosphorylated beta-glucosides by the phospho-beta-glucosidase ChbF. Catalyzes the removal of only one acetyl group from chitobiose-6-P to yield monoacetylchitobiose-6-P, the inducer of ChbR and the substrate of ChbF. This chain is Chitooligosaccharide deacetylase, found in Escherichia coli O6:K15:H31 (strain 536 / UPEC).